Reading from the N-terminus, the 692-residue chain is DNA ligase (692 aa).

NAD(+)-binding positions include 40–44 (DAAYD), 89–90 (SL), and Glu-121. Lys-123 (N6-AMP-lysine intermediate) is an active-site residue. 4 residues coordinate NAD(+): Arg-144, Glu-181, Lys-297, and Lys-321. Zn(2+) is bound by residues Cys-415, Cys-417, Cys-439, and Cys-445. Positions 614–692 (KTDTAVAGKT…EDEWLEMVGS (79 aa)) constitute a BRCT domain.

The protein belongs to the NAD-dependent DNA ligase family. LigA subfamily. It depends on Mg(2+) as a cofactor. Mn(2+) is required as a cofactor.

It carries out the reaction NAD(+) + (deoxyribonucleotide)n-3'-hydroxyl + 5'-phospho-(deoxyribonucleotide)m = (deoxyribonucleotide)n+m + AMP + beta-nicotinamide D-nucleotide.. Functionally, DNA ligase that catalyzes the formation of phosphodiester linkages between 5'-phosphoryl and 3'-hydroxyl groups in double-stranded DNA using NAD as a coenzyme and as the energy source for the reaction. It is essential for DNA replication and repair of damaged DNA. The protein is DNA ligase of Phenylobacterium zucineum (strain HLK1).